The chain runs to 375 residues: Anhydro-N-acetylmuramic acid kinase (375 aa).

Residue G18–D25 coordinates ATP.

The protein belongs to the anhydro-N-acetylmuramic acid kinase family.

The catalysed reaction is 1,6-anhydro-N-acetyl-beta-muramate + ATP + H2O = N-acetyl-D-muramate 6-phosphate + ADP + H(+). It participates in amino-sugar metabolism; 1,6-anhydro-N-acetylmuramate degradation. Its pathway is cell wall biogenesis; peptidoglycan recycling. Functionally, catalyzes the specific phosphorylation of 1,6-anhydro-N-acetylmuramic acid (anhMurNAc) with the simultaneous cleavage of the 1,6-anhydro ring, generating MurNAc-6-P. Is required for the utilization of anhMurNAc either imported from the medium or derived from its own cell wall murein, and thus plays a role in cell wall recycling. The chain is Anhydro-N-acetylmuramic acid kinase from Rhodospirillum rubrum (strain ATCC 11170 / ATH 1.1.1 / DSM 467 / LMG 4362 / NCIMB 8255 / S1).